A 107-amino-acid chain; its full sequence is Protein KleE (107 aa).

This chain is Protein KleE (kleE), found in Escherichia coli.